Here is a 47-residue protein sequence, read N- to C-terminus: FLEYLDKDRVRVQLPGLSQELLQKTPGFSGADLANLLNEAAILAGRR.

The protein in the N-terminal section; belongs to the AAA ATPase family. In the C-terminal section; belongs to the peptidase M41 family. The cofactor is Zn(2+).

The protein localises to the plastid. It localises to the chloroplast membrane. Functionally, seems to act as an ATP-dependent zinc metallopeptidase. The sequence is that of ATP-dependent zinc metalloprotease FTSH, chloroplastic from Populus euphratica (Euphrates poplar).